Consider the following 178-residue polypeptide: Large ribosomal subunit protein uL6 (178 aa).

Belongs to the universal ribosomal protein uL6 family. As to quaternary structure, part of the 50S ribosomal subunit.

Its function is as follows. This protein binds to the 23S rRNA, and is important in its secondary structure. It is located near the subunit interface in the base of the L7/L12 stalk, and near the tRNA binding site of the peptidyltransferase center. This chain is Large ribosomal subunit protein uL6, found in Kocuria rhizophila (strain ATCC 9341 / DSM 348 / NBRC 103217 / DC2201).